The sequence spans 320 residues: tRNA-cytidine(32) 2-sulfurtransferase (320 aa).

The PP-loop motif motif lies at 54-59 (SGGKDS). The [4Fe-4S] cluster site is built by C129, C132, and C220.

It belongs to the TtcA family. Homodimer. Mg(2+) is required as a cofactor. The cofactor is [4Fe-4S] cluster.

It localises to the cytoplasm. It carries out the reaction cytidine(32) in tRNA + S-sulfanyl-L-cysteinyl-[cysteine desulfurase] + AH2 + ATP = 2-thiocytidine(32) in tRNA + L-cysteinyl-[cysteine desulfurase] + A + AMP + diphosphate + H(+). It functions in the pathway tRNA modification. Catalyzes the ATP-dependent 2-thiolation of cytidine in position 32 of tRNA, to form 2-thiocytidine (s(2)C32). The sulfur atoms are provided by the cysteine/cysteine desulfurase (IscS) system. This is tRNA-cytidine(32) 2-sulfurtransferase from Bordetella pertussis (strain Tohama I / ATCC BAA-589 / NCTC 13251).